The following is a 1088-amino-acid chain: MTLFRQNSALPNFLDSQRDSFRYFLETGIREELDFFSPIVGQSLGSSSKRPTDRFISVSFHSKDFYFKKPHYTPQEAVQKLGTYKSSLIVPVHVYSKYLNLNATFPVAFCDLPLMTEHGTFILNGSPRVIVHQIVRCPGVYLKPQFDKQGNRTHLVSFLSAYGSWLRFETDKKGVVFAHIDNLRKVPVTVFLQALGFSMDTIVGALKYPEALDPTLKEVDWKLTTDEAILLLMSRLFPNRPATVLRGRKFLFNQFFNPRRYSLSDVGRKRVNQKFRMRSKTKHLTLTPQDALAALDYLLRCENGETEFLDDIDHLKNRRARLAGELIQTQFRLGLNRLERVIYNRISDENILRKTPGALGSLNSLIRTQVLASVFQEFFGSNQLSQFMDQTNPLAEITHKRRLSSLGPGGLNRDRAGLIVRGIHPSYYGRICPIETPEGKNAGLVGSIATFTQINKNGFLESPYYKLISESNTPDRNGFFLLSAFYEEDTVVAQGDVDLSNFRIPTRNKSQFTENTVQEINFLGLCPIQFMSIATSLIPFLEHDDANRALMGSNMQRQAVSLLRSERPFVGTGLEAHVTRDIGATIVAKQNSYISYVDAQRIDYFTPVIGDTNLIDYQNLTAEDVFASNQFKHNTIWLTSYQRSNQDTCLNHKPLVEANTWVEAGDCLADNAATAKGELALGRNILIGYMPWEGYNFEDAVLVSERLVYDDVFTSIHISRYEVSTARLREGQEYFTNQVDRNQYLDEFGVVKIGTWVEAGDVLVGKISPQPDSDNDPESRLLRAIFGGVARNTKTTSYCLSSGVSGRILDVRCEFKRQTKNIEDESIESTGSVYVYLVEKRRLQVGDKVAGRHGNKGIVSNILPRVDMPYLQSGKALDMVLNPLGVPSRMNVGQIFECLLGLAANTLKQNFKVLPFDEMHGAEVSRGFVYHYLYKSRLLTQQKWLFKPNSPGKSIVFDGRTGLNFDQPVTVGYPYILKLVHLVDDKIHARSTGPYSLVTQQPLGGRSKKGGQRLGEMEVWALEGFGAAYVLQELLTIKSDDMIGRNRAFMSMIRGTLLPKSGIPESFKVLVSELRGLCLDMSIARINF.

This sequence belongs to the RNA polymerase beta chain family. As to quaternary structure, in plastids the minimal PEP RNA polymerase catalytic core is composed of four subunits: alpha, beta, beta', and beta''. When a (nuclear-encoded) sigma factor is associated with the core the holoenzyme is formed, which can initiate transcription.

Its subcellular location is the plastid. It localises to the chloroplast. The enzyme catalyses RNA(n) + a ribonucleoside 5'-triphosphate = RNA(n+1) + diphosphate. In terms of biological role, DNA-dependent RNA polymerase catalyzes the transcription of DNA into RNA using the four ribonucleoside triphosphates as substrates. The polypeptide is DNA-directed RNA polymerase subunit beta (Ostreococcus tauri).